The chain runs to 90 residues: uncharacterized protein (90 aa).

Transmembrane regions (helical) follow at residues 23–43 (ITTIHLLSSIGAINWGLVGLF) and 48–68 (VTLLFGSFPIIVTIFYIIIGF).

It localises to the cell membrane. This is an uncharacterized protein from Rickettsia prowazekii (strain Madrid E).